Reading from the N-terminus, the 51-residue chain is Insulin (51 aa).

3 disulfide bridges follow: Cys8–Cys37, Cys20–Cys50, and Cys36–Cys41.

It belongs to the insulin family. As to quaternary structure, heterodimer of a B chain and an A chain linked by two disulfide bonds.

The protein resides in the secreted. In terms of biological role, insulin decreases blood glucose concentration. It increases cell permeability to monosaccharides, amino acids and fatty acids. It accelerates glycolysis, the pentose phosphate cycle, and glycogen synthesis in liver. The protein is Insulin (ins) of Platichthys flesus (European flounder).